A 230-amino-acid polypeptide reads, in one-letter code: Methyltransferase aurB (230 aa).

It belongs to the methyltransferase superfamily.

The protein operates within polyketide biosynthesis. In terms of biological role, methyltransferase; part of the gene cluster that mediates the biosynthesis of aurovertins, fungal polyketides that exhibit potent inhibition of adenosine triphosphate synthase. Tha biosynthesis starts with the HR-PKS aurA that selects propionate as the starter unit; synthesizes a hexa-ene chain through the repeated functions of the KR and DH domains in the first six iterations; selectively introduces three alpha-methyl substitutions at C4, C6, and C16 using the S-adensylmethionine-dependent cMET; and shuts off KR and DH in the last three iterations to afford a 1,3,5-triketo portion that can undergo intramolecular cyclization to yield the alpha-pyrone intermediate. AurE may act as a cyclase and enhances the rate of pyrone formation and product release of aurA. The methyltransferase aurB then methylates the C17 hydroxyl group. C17 methylation is required to initiate epoxidation by the downstream monooxygenase aurC. The monooxygenase aurC and the epoxide hydrolase aurD can iteratively transform the terminal triene portion of the methylated precursor into the dioxabicyclo[3.2.1]octane scaffold of aurovertin E. Epoxidation modifications of the precursor occur in two separate steps; bis-epoxidation of the two terminal olefins takes place first, followed by another epoxidation that occurs at C7-C8 after tetrahydrofuran formation. The O-acyltransferase aurG converts aurovertin E to aurovertin A. This chain is Methyltransferase aurB, found in Calcarisporium arbuscula (Dendryphion arbuscula).